The chain runs to 646 residues: MASGGAFCLIANDGKADKIILAQDLLNSRISNIKNVNKSYGKPDPEPTLSQIEETHLVHFNAHFKPYVPVGFEYNKVRPHTGTPTLGNKLTFGIPQYGDFFHDMVGHHILGACHSSWQDAPIQGTSQMGAHGQLQTFPRNGYDWDNQTPLEGAVYTLVDPFGRPIVPGTKNAYRNLVYYCEYPGERLYENVRFDVNGNSLDEYSSDVTTLVRKFCIPGDKMTGYKHLVGQEVSVEGTSGPLLCNIHDLHKPHQSKPILTDENDTQRTCSHTNPKFLSQHFPENSHNIQTAGKQDITPITDATYLDIRRNVHYSCNGPQTPKYYQPPLALWIKLRFWFNENVNLAIPSVSIPFGERFITIKLASQKDLVNEFPGLFVRQSRFIAGRPSRRNIRFKPWFIPGVINEISLTNNELYINNLFVTPEIHNLFVKRVRFSLIRVHKTQVTHTNNNHHDEKLMSALKWPIEYMFIGLKPTWNISDQNPHQHRDWHKFGHVVNAIMQPTHHAEISFQDRDTALPDACSSISDISPITYPITLPIIKNISVTAHGINLIDKFPSKFCSSYIPFHYGGNAIKTPDDPGAMMITFALKPREEYQPSGHINVSRAREFYISWDTDYVGSITTADLVVSASAINFLLLQNGSAVLRYST.

Belongs to the NCLDV major capsid protein family. In terms of assembly, homotrimer. The membrane-bound form, but not the cytosolic one, assembles into large complexes. Interacts with the minor capsid proteins M1249L and p17; these interactions form a rigid zipper structure that stabilizes the capsomers.

Its subcellular location is the virion. It localises to the host endoplasmic reticulum membrane. The protein localises to the host cytoplasm. It is found in the host cytosol. Its function is as follows. Capsid protein that self-assembles to form the pseudo-hexameric capsomers of the icosahedral capsid. The capsid is constructed of 2760 pseudo-hexameric capsomers and 12 pentameric capsomers, with a T=277 symmetry, about 200 nm in diameter. The capsid encapsulates the DNA-containing nucleoid, the core shell and the inner membrane. Plays an essential role in virion assembly. Involved in virus attachment to the host cell. In Ornithodoros (relapsing fever ticks), this protein is Major capsid protein.